Reading from the N-terminus, the 424-residue chain is MHDLRALRADPAAFDAALARRGEAPAAIHIASLDEDRRAAVTALQDKQARRKSLSKEVGALRRTGEDSTALEAEAVQLREDIEKLEVLVRELDAEIRDCLVVLPNRLDDGVPEGADESANVVVHQVGERRDFAFPPREHFALGEALGLMDFETAGKLSGARFVVLRGALARMERALGQFMLDLHVQEHGYTETAVPVLVNEAAMFGTDKLPKFADQSFRTEDGRWLIPTAEVPLTASVAGDILPASALPRRMVALSSCFRSEAGAAGRDTRGMLRQHQFQKVEMVSITAPGDSDAEHERMTRCAEKVLERLGIPYRRMLLCAGDTGFGAARTFDLEAWLPGQDAWREISSCSTTRDFQARRMNARYRPADGAGPEFVHTLNGSGLAVGRTLIAVMENYQNADGSITVPQALRPYMNGLAAISAR.

229–231 (TAE) provides a ligand contact to L-serine. ATP is bound at residue 260–262 (RSE). Glu-283 is a binding site for L-serine. 347–350 (EISS) is a binding site for ATP. Position 383 (Ser-383) interacts with L-serine.

Belongs to the class-II aminoacyl-tRNA synthetase family. Type-1 seryl-tRNA synthetase subfamily. As to quaternary structure, homodimer. The tRNA molecule binds across the dimer.

The protein localises to the cytoplasm. It carries out the reaction tRNA(Ser) + L-serine + ATP = L-seryl-tRNA(Ser) + AMP + diphosphate + H(+). It catalyses the reaction tRNA(Sec) + L-serine + ATP = L-seryl-tRNA(Sec) + AMP + diphosphate + H(+). Its pathway is aminoacyl-tRNA biosynthesis; selenocysteinyl-tRNA(Sec) biosynthesis; L-seryl-tRNA(Sec) from L-serine and tRNA(Sec): step 1/1. Its function is as follows. Catalyzes the attachment of serine to tRNA(Ser). Is also able to aminoacylate tRNA(Sec) with serine, to form the misacylated tRNA L-seryl-tRNA(Sec), which will be further converted into selenocysteinyl-tRNA(Sec). In Gluconacetobacter diazotrophicus (strain ATCC 49037 / DSM 5601 / CCUG 37298 / CIP 103539 / LMG 7603 / PAl5), this protein is Serine--tRNA ligase.